The sequence spans 465 residues: Iron-sulfur cluster assembly SufBD family protein SERP0500 (465 aa).

The protein belongs to the iron-sulfur cluster assembly SufBD family.

The sequence is that of Iron-sulfur cluster assembly SufBD family protein SERP0500 from Staphylococcus epidermidis (strain ATCC 35984 / DSM 28319 / BCRC 17069 / CCUG 31568 / BM 3577 / RP62A).